A 95-amino-acid polypeptide reads, in one-letter code: UPF0132 membrane protein AF_0736 (95 aa).

3 consecutive transmembrane segments (helical) span residues 2–22 (CYTLGFVTGVLFLLFDRSPFV), 32–52 (TFSTITALVILLPVLPGGALL), and 55–75 (VVMAFSIILWAFCIVKASRGE).

It belongs to the UPF0132 family.

The protein localises to the cell membrane. This Archaeoglobus fulgidus (strain ATCC 49558 / DSM 4304 / JCM 9628 / NBRC 100126 / VC-16) protein is UPF0132 membrane protein AF_0736.